We begin with the raw amino-acid sequence, 152 residues long: Protein-export protein SecB (152 aa).

Belongs to the SecB family. In terms of assembly, homotetramer, a dimer of dimers. One homotetramer interacts with 1 SecA dimer.

The protein localises to the cytoplasm. One of the proteins required for the normal export of preproteins out of the cell cytoplasm. It is a molecular chaperone that binds to a subset of precursor proteins, maintaining them in a translocation-competent state. It also specifically binds to its receptor SecA. The polypeptide is Protein-export protein SecB (Rickettsia massiliae (strain Mtu5)).